A 374-amino-acid chain; its full sequence is MLRLGGAGLVRGLRVVSPAWLRGPGGLPLALARTTGTSGARDRRAPASGTQRGRALSLSAAAVVNSAPRPLQPYLRLMRLDKPIGTWLLYLPCTWSIGLAADPGCFPDWYMLSLFGTGAILMRGAGCTINDMWDRDFDKKVERTANRPIAAGDISAFQSFVFLGAQLTLALGVLLHLNYYSIAMGAASLLLVVTYPLMKRVTFWPQLALGLTFNWGALLGWSAVKGSCDPAVCLPLYFSGVMWTLIYDTIYAHQDKKDDALIGLKSTALLFRENTKQWLSGFGVAMVGALSLVGASSGQTLPYYAAVAAVGAHLAHQIYTVDIHRAEDCWEKFTSNRTVGLLLFLGIVLGNLYKDKPDETKGVDAVGEESERTS.

The N-terminal 63 residues, 1–63 (MLRLGGAGLV…RALSLSAAAV (63 aa)), are a transit peptide targeting the mitochondrion. The Mitochondrial matrix segment spans residues 64–83 (VNSAPRPLQPYLRLMRLDKP). Residues 84–104 (IGTWLLYLPCTWSIGLAADPG) traverse the membrane as a helical segment. The Mitochondrial intermembrane portion of the chain corresponds to 105-108 (CFPD). A helical transmembrane segment spans residues 109–129 (WYMLSLFGTGAILMRGAGCTI). Topologically, residues 130 to 153 (NDMWDRDFDKKVERTANRPIAAGD) are mitochondrial matrix. A helical membrane pass occupies residues 154 to 174 (ISAFQSFVFLGAQLTLALGVL). The Mitochondrial intermembrane segment spans residues 175 to 176 (LH). Residues 177 to 197 (LNYYSIAMGAASLLLVVTYPL) form a helical membrane-spanning segment. Residues 198–200 (MKR) are Mitochondrial matrix-facing. The helical transmembrane segment at 201-221 (VTFWPQLALGLTFNWGALLGW) threads the bilayer. Over 222-230 (SAVKGSCDP) the chain is Mitochondrial intermembrane. The helical transmembrane segment at 231 to 251 (AVCLPLYFSGVMWTLIYDTIY) threads the bilayer. Over 252–277 (AHQDKKDDALIGLKSTALLFRENTKQ) the chain is Mitochondrial matrix. A helical transmembrane segment spans residues 278–298 (WLSGFGVAMVGALSLVGASSG). Residues 299 to 300 (QT) lie on the Mitochondrial intermembrane side of the membrane. A helical membrane pass occupies residues 301 to 321 (LPYYAAVAAVGAHLAHQIYTV). Topologically, residues 322-332 (DIHRAEDCWEK) are mitochondrial matrix. Residues 333–353 (FTSNRTVGLLLFLGIVLGNLY) traverse the membrane as a helical segment. Residues 354–374 (KDKPDETKGVDAVGEESERTS) lie on the Mitochondrial intermembrane side of the membrane.

It belongs to the UbiA prenyltransferase family. It depends on Mg(2+) as a cofactor.

Its subcellular location is the mitochondrion inner membrane. The enzyme catalyses an all-trans-polyprenyl diphosphate + 4-hydroxybenzoate = a 4-hydroxy-3-(all-trans-polyprenyl)benzoate + diphosphate. It carries out the reaction all-trans-decaprenyl diphosphate + 4-hydroxybenzoate = 4-hydroxy-3-(all-trans-decaprenyl)benzoate + diphosphate. It catalyses the reaction all-trans-nonaprenyl diphosphate + 4-hydroxybenzoate = 4-hydroxy-3-(all-trans-nonaprenyl)benzoate + diphosphate. The protein operates within cofactor biosynthesis; ubiquinone biosynthesis. Its function is as follows. Mediates the second step in the final reaction sequence of coenzyme Q (CoQ) biosynthesis. Catalyzes the prenylation of para-hydroxybenzoate (PHB) with an all-trans polyprenyl group (such as all-trans-nonaprenyl diphosphate). The length of the polyprenyl side chain varies depending on the species, in humans, the side chain is comprised of 10 isoprenyls producing CoQ10 (also known as ubiquinone), whereas rodents predominantly generate CoQ9. However, this specificity is not complete, human tissues have low amounts of CoQ9 and rodent organs contain some CoQ10. Plays a central role in the biosynthesis of CoQ9. CoQ9 is a vital molecule that transports electrons from mitochondrial respiratory chain complexes. CoQs also function as cofactors for uncoupling protein and plays a role as regulator of the extracellularly-induced ceramide-dependent apoptotic pathway. Regulates mitochondrial permeability transition pore (mPTP) opening and ROS production (pivotal events in cell death) in a tissue specific manner. The sequence is that of 4-hydroxybenzoate polyprenyltransferase, mitochondrial from Rattus norvegicus (Rat).